Consider the following 143-residue polypeptide: UPF0179 protein PTO0851 (143 aa).

Belongs to the UPF0179 family.

This Picrophilus torridus (strain ATCC 700027 / DSM 9790 / JCM 10055 / NBRC 100828 / KAW 2/3) protein is UPF0179 protein PTO0851.